A 345-amino-acid polypeptide reads, in one-letter code: MDENKKRALAAALGQIEKQFGKGSVMRMGDRVVEPVEAIPTGSLMLDIALGIGGLPKGRVVEIYGPESSGKTTLTLQAIAECQKLGGTAAFIDAEHALDPIYAAKLGVNVDDLLLSQPDTGEQALEIADMLVRSGSVDILVVDSVAALTPKAEIEGEMGDQLPGLQARLMSQALRKLTGNIKRSNTLVVFINQLRMKIGVMMPGQSPEVTTGGNALKFYASVRLDIRRIGAIKKGDEIIGNQTKIKVVKNKLAPPFKQVITEILYGEGISREGELIDMGVDAKLVEKAGAWYSYGEERIGQGKDNARGYLRDNPTVAAKLEAELREKFQPSEAAREEGDDEGDDE.

Residue 65–72 (GPESSGKT) coordinates ATP.

This sequence belongs to the RecA family.

The protein resides in the cytoplasm. Functionally, can catalyze the hydrolysis of ATP in the presence of single-stranded DNA, the ATP-dependent uptake of single-stranded DNA by duplex DNA, and the ATP-dependent hybridization of homologous single-stranded DNAs. It interacts with LexA causing its activation and leading to its autocatalytic cleavage. The protein is Protein RecA of Stenotrophomonas maltophilia (strain R551-3).